A 345-amino-acid chain; its full sequence is GTPase Obg (345 aa).

Positions 1–159 (MKFLDQAKVY…KWIWLRLKLI (159 aa)) constitute an Obg domain. Residues 160–327 (ADAGLVGLPN…ALRALLAVID (168 aa)) form the OBG-type G domain. Residues 166–173 (GLPNAGKS), 191–195 (FTTLH), 212–215 (DIPG), 279–282 (SKID), and 308–310 (SSQ) each bind GTP. Mg(2+)-binding residues include Ser173 and Thr193.

The protein belongs to the TRAFAC class OBG-HflX-like GTPase superfamily. OBG GTPase family. Monomer. Mg(2+) serves as cofactor.

It localises to the cytoplasm. Its function is as follows. An essential GTPase which binds GTP, GDP and possibly (p)ppGpp with moderate affinity, with high nucleotide exchange rates and a fairly low GTP hydrolysis rate. Plays a role in control of the cell cycle, stress response, ribosome biogenesis and in those bacteria that undergo differentiation, in morphogenesis control. This Azorhizobium caulinodans (strain ATCC 43989 / DSM 5975 / JCM 20966 / LMG 6465 / NBRC 14845 / NCIMB 13405 / ORS 571) protein is GTPase Obg.